The chain runs to 338 residues: MSTLRLLISDSYDPWFNLAVEECIFRQMPATQRVLFLWRNADTVVIGRAQNPWKECNTRRMEEDNVRLARRSSGGGAVFHDLGNTCFTFMAGKPEYDKTISTSIVLNALNALGVSAEASGRNDLVVKTAEGDRKVSGSAYRETKDRGFHHGTLLLNADLSRLANYLNPDKKKLAAKGITSVRSRVTNLTELLPGITHEQVCEAIREAFFAHYGERVEAEIISPDKTPDLPNFAETFARQSSWEWNFGQAPAFSHLLDERFSWGGVELHFDVEKGHITRAQVFTDSLNPAPLEALAGRLQGCLYRADMLQQECEALLVDFPEQEKELPELSAWIAGAVR.

The BPL/LPL catalytic domain maps to 29-216; sequence PATQRVLFLW…AFFAHYGERV (188 aa). ATP is bound by residues Arg71, 76–79, and Lys134; that span reads GAVF. Lys134 is a binding site for (R)-lipoate.

The protein belongs to the LplA family. In terms of assembly, monomer.

It localises to the cytoplasm. It catalyses the reaction L-lysyl-[lipoyl-carrier protein] + (R)-lipoate + ATP = N(6)-[(R)-lipoyl]-L-lysyl-[lipoyl-carrier protein] + AMP + diphosphate + H(+). It participates in protein modification; protein lipoylation via exogenous pathway; protein N(6)-(lipoyl)lysine from lipoate: step 1/2. Its pathway is protein modification; protein lipoylation via exogenous pathway; protein N(6)-(lipoyl)lysine from lipoate: step 2/2. Catalyzes both the ATP-dependent activation of exogenously supplied lipoate to lipoyl-AMP and the transfer of the activated lipoyl onto the lipoyl domains of lipoate-dependent enzymes. In Escherichia coli O6:H1 (strain CFT073 / ATCC 700928 / UPEC), this protein is Lipoate-protein ligase A.